The primary structure comprises 492 residues: Variant surface glycoprotein MITAT 1.1 (492 aa).

The first 32 residues, 1 to 32 (MATGRAKNTKWARWLSTAGLIIVVTLPATTMA), serve as a signal peptide directing secretion. 2 disulfides stabilise this stretch: Cys-47/Cys-177 and Cys-155/Cys-222. 2 N-linked (GlcNAc...) asparagine glycosylation sites follow: Asn-298 and Asn-471. Ser-475 is lipidated: GPI-anchor amidated serine. A propeptide spans 476 to 492 (NSFLIHKAPLLLAFLLF) (removed in mature form).

The protein resides in the cell membrane. Its function is as follows. VSG forms a coat on the surface of the parasite. The trypanosome evades the immune response of the host by expressing a series of antigenically distinct VSGs from an estimated 1000 VSG genes. In Trypanosoma brucei brucei, this protein is Variant surface glycoprotein MITAT 1.1.